Reading from the N-terminus, the 30-residue chain is Beta-endorphin-2 (30 aa).

Tyr-1 carries the N-acetyltyrosine modification.

This sequence belongs to the POMC family.

The protein resides in the secreted. The chain is Beta-endorphin-2 from Oncorhynchus keta (Chum salmon).